Reading from the N-terminus, the 225-residue chain is Elongation factor 1-beta (225 aa).

One can recognise a GST C-terminal domain in the interval 2 to 84 (GFGDLKSPAG…ALGKYGPADV (83 aa)). N6-acetyllysine is present on K7. 2 positions are modified to phosphoserine: S8 and S42. Residues 78-115 (KYGPADVEDTTGSGATDSKDDDDIDLFGSDDEEESEEA) form a disordered region. A phosphothreonine mark is found at T88 and T93. S95 and S106 each carry phosphoserine. Residues 96-113 (KDDDDIDLFGSDDEEESE) are compositionally biased toward acidic residues. Residue K147 forms a Glycyl lysine isopeptide (Lys-Gly) (interchain with G-Cter in SUMO2) linkage. S174 bears the Phosphoserine mark.

Belongs to the EF-1-beta/EF-1-delta family. EF-1 is composed of 4 subunits: alpha, beta (alpha subunit of the eEF1B subcomplex), delta (beta subunit of the eEF1B subcomplex), and gamma (gamma subunit of the eEF1B subcomplex). Interacts with elongation factor EEF1A1. Post-translationally, phosphorylation affects the GDP/GTP exchange rate.

In terms of biological role, catalytic subunit of the guanine nucleotide exchange factor (GEF) (eEF1B subcomplex) of the eukaryotic elongation factor 1 complex (eEF1). Stimulates the exchange of GDP for GTP on elongation factor 1A (eEF1A), probably by displacing GDP from the nucleotide binding pocket in eEF1A. The sequence is that of Elongation factor 1-beta (EEF1B2) from Homo sapiens (Human).